Reading from the N-terminus, the 406-residue chain is Glutamyl-tRNA reductase (406 aa).

Substrate is bound by residues 51–54 (TCNR), Ser101, 106–108 (ESE), and Gln112. Catalysis depends on Cys52, which acts as the Nucleophile. An NADP(+)-binding site is contributed by 180–185 (GAGSIG).

This sequence belongs to the glutamyl-tRNA reductase family. As to quaternary structure, homodimer.

It carries out the reaction (S)-4-amino-5-oxopentanoate + tRNA(Glu) + NADP(+) = L-glutamyl-tRNA(Glu) + NADPH + H(+). It functions in the pathway porphyrin-containing compound metabolism; protoporphyrin-IX biosynthesis; 5-aminolevulinate from L-glutamyl-tRNA(Glu): step 1/2. Functionally, catalyzes the NADPH-dependent reduction of glutamyl-tRNA(Glu) to glutamate 1-semialdehyde (GSA). The protein is Glutamyl-tRNA reductase of Caldivirga maquilingensis (strain ATCC 700844 / DSM 13496 / JCM 10307 / IC-167).